Consider the following 266-residue polypeptide: Ribosomal RNA small subunit methyltransferase A (266 aa).

The S-adenosyl-L-methionine site is built by Asn10, Ile12, Gly37, Glu58, Asp82, and Asn105.

This sequence belongs to the class I-like SAM-binding methyltransferase superfamily. rRNA adenine N(6)-methyltransferase family. RsmA subfamily.

It localises to the cytoplasm. It carries out the reaction adenosine(1518)/adenosine(1519) in 16S rRNA + 4 S-adenosyl-L-methionine = N(6)-dimethyladenosine(1518)/N(6)-dimethyladenosine(1519) in 16S rRNA + 4 S-adenosyl-L-homocysteine + 4 H(+). In terms of biological role, specifically dimethylates two adjacent adenosines (A1518 and A1519) in the loop of a conserved hairpin near the 3'-end of 16S rRNA in the 30S particle. May play a critical role in biogenesis of 30S subunits. The chain is Ribosomal RNA small subunit methyltransferase A from Mycoplasma capricolum subsp. capricolum (strain California kid / ATCC 27343 / NCTC 10154).